Reading from the N-terminus, the 456-residue chain is Phospholipase A1 member A (456 aa).

The signal sequence occupies residues Met-1 to Gly-25. Residue Ser-166 is the Nucleophile of the active site. Residue Asp-190 is the Charge relay system of the active site. Residues Cys-245 and Cys-258 are joined by a disulfide bond. His-260 functions as the Charge relay system in the catalytic mechanism. 2 disulfide bridges follow: Cys-282–Cys-293 and Cys-296–Cys-304. Residue Asn-365 is glycosylated (N-linked (GlcNAc...) asparagine).

This sequence belongs to the AB hydrolase superfamily. Lipase family.

The protein resides in the secreted. It carries out the reaction a 1,2-diacyl-sn-glycero-3-phospho-L-serine + H2O = a 2-acyl-sn-glycero-3-phospho-L-serine + a fatty acid + H(+). The catalysed reaction is 1,2-di-(9Z)-octadecenoyl-sn-glycero-3-phospho-L-serine + H2O = 2-(9Z-octadecenoyl)-sn-glycero-3-phospho-L-serine + (9Z)-octadecenoate + H(+). It catalyses the reaction 1-hexadecanoyl-2-(5Z,8Z,11Z,14Z-eicosatetraenoyl)-sn-glycero-3-phospho-L-serine + H2O = 2-(5Z,8Z,11Z,14Z)-eicosatetraenoyl-sn-glycero-3-phospho-L-serine + hexadecanoate + H(+). The enzyme catalyses a 1-acyl-sn-glycero-3-phospho-L-serine + H2O = sn-glycero-3-phospho-L-serine + a fatty acid + H(+). It carries out the reaction 1-(9Z-octadecenoyl)-sn-glycero-3-phospho-L-serine + H2O = sn-glycero-3-phospho-L-serine + (9Z)-octadecenoate + H(+). Its function is as follows. Hydrolyzes the ester bond of the acyl group attached at the sn-1 position of phosphatidylserines (phospholipase A1 activity) and 1-acyl-2-lysophosphatidylserines (lysophospholipase activity) in the pathway of phosphatidylserines acyl chain remodeling. Cleaves phosphatidylserines exposed on the outer leaflet of the plasma membrane of apoptotic cells producing 2-acyl-1-lysophosphatidylserines, which in turn enhance mast cell activation and histamine production. Has no activity toward other glycerophospholipids including phosphatidylcholines, phosphatidylethanolamines, phosphatidic acids or phosphatidylinositols, or glycerolipids such as triolein. The sequence is that of Phospholipase A1 member A (PLA1A) from Pongo abelii (Sumatran orangutan).